Here is a 177-residue protein sequence, read N- to C-terminus: Interleukin-19 (177 aa).

The N-terminal stretch at 1 to 24 (MKLQCVSLWLLGTILILCSVDNHG) is a signal peptide. 3 disulfide bridges follow: Cys-28-Cys-121, Cys-75-Cys-127, and Cys-76-Cys-129. The N-linked (GlcNAc...) asparagine glycan is linked to Asn-56. N-linked (GlcNAc...) asparagine glycosylation occurs at Asn-135.

Belongs to the IL-10 family.

The protein localises to the secreted. Its function is as follows. Cytokine that functions as an anti-inflammatory and proangiogenic factor. Polarizes adaptive immunity to an anti-inflammatory phenotype through induction of T-helper 2 responses by both down-regulation of IFN-gamma and up-regulation of IL4 and IL13. Produced by osteocytes, stimulates granulopoiesis and neutrophil formation. Exerts its biological effect through a receptor complex consisting of a heterodimer of IL20RA and IL20RB. In turn, activates the Janus kinase (JAK) and signal transducer and activator of transcription (STAT) pathway, and importantly, STAT3. This chain is Interleukin-19 (IL19), found in Homo sapiens (Human).